Reading from the N-terminus, the 151-residue chain is Potassium/proton antiporter CemA (151 aa).

2 helical membrane-spanning segments follow: residues 7-27 (LPSLLYLVFIVLLPWGVSSSF) and 107-127 (ILHFSTNIICLAILSGSFFLG).

This sequence belongs to the CemA family.

It is found in the plastid. The protein resides in the chloroplast inner membrane. It catalyses the reaction K(+)(in) + H(+)(out) = K(+)(out) + H(+)(in). Its function is as follows. Contributes to K(+)/H(+) antiport activity by supporting proton efflux to control proton extrusion and homeostasis in chloroplasts in a light-dependent manner to modulate photosynthesis. Prevents excessive induction of non-photochemical quenching (NPQ) under continuous-light conditions. Indirectly promotes efficient inorganic carbon uptake into chloroplasts. The sequence is that of Potassium/proton antiporter CemA from Aegilops crassa (Persian goatgrass).